Here is a 558-residue protein sequence, read N- to C-terminus: Energy-dependent translational throttle protein EttA (558 aa).

ABC transporter domains are found at residues 6 to 256 and 322 to 552; these read YTMK…AVQG and VEVD…RVTH. 38 to 45 contacts ATP; sequence GPNGAGKS. The segment at 94 to 136 is arm; sequence GDIKIKLDRFNEVAELMATDYTDELMEEMGRLQEELDHADAWD. Residues 239–320 form a ptIM region; that stretch reads GNYSTYLEKK…IPVGPRLGNV (82 aa). An ATP-binding site is contributed by 354–361; the sequence is GPNGVGKT.

The protein belongs to the ABC transporter superfamily. ABCF family. Translational throttle EttA subfamily. Monomer. Probably contacts ribosomal proteins L1, L5, L33 and S7, the 16S and 23S rRNA and the P-site containing tRNA(fMet).

The protein localises to the cytoplasm. The enzyme catalyses ATP + H2O = ADP + phosphate + H(+). In terms of biological role, a translation factor that gates the progression of the 70S ribosomal initiation complex (IC, containing tRNA(fMet) in the P-site) into the translation elongation cycle by using a mechanism sensitive to the ATP/ADP ratio. Binds to the 70S ribosome E-site where it modulates the state of the translating ribosome during subunit translocation. ATP hydrolysis probably frees it from the ribosome, which can enter the elongation phase. In Mycobacterium tuberculosis (strain CDC 1551 / Oshkosh), this protein is Energy-dependent translational throttle protein EttA.